Consider the following 148-residue polypeptide: Probable histone H2A.1 (148 aa).

Residues 1–23 (MDASTKTKKGAGGRKGGPRKKSV) are compositionally biased toward basic residues. 2 disordered regions span residues 1 to 28 (MDASTKTKKGAGGRKGGPRKKSVTRSTR) and 127 to 148 (KNEKAATTTKSPSKATKSPKKA). Positions 131–142 (AATTTKSPSKAT) are enriched in low complexity. 2 short sequence motifs (SPKK motif) span residues 137 to 140 (SPSK) and 144 to 147 (SPKK).

The protein belongs to the histone H2A family. In terms of assembly, the nucleosome is a histone octamer containing two molecules each of H2A, H2B, H3 and H4 assembled in one H3-H4 heterotetramer and two H2A-H2B heterodimers. The octamer wraps approximately 147 bp of DNA.

Its subcellular location is the nucleus. The protein localises to the chromosome. Its function is as follows. Core component of nucleosome. Nucleosomes wrap and compact DNA into chromatin, limiting DNA accessibility to the cellular machineries which require DNA as a template. Histones thereby play a central role in transcription regulation, DNA repair, DNA replication and chromosomal stability. DNA accessibility is regulated via a complex set of post-translational modifications of histones, also called histone code, and nucleosome remodeling. The polypeptide is Probable histone H2A.1 (Medicago truncatula (Barrel medic)).